Consider the following 1119-residue polypeptide: Multiple epidermal growth factor-like domains protein 10 (1119 aa).

Residues 1-22 (MMSSCGPLLLAVSCCLVALTSS) form the signal peptide. The Extracellular portion of the chain corresponds to 23-851 (LNLDDPNVCS…ALPMDSYQIG (829 aa)). Positions 27-104 (DPNVCSHWES…FYESGDICVP (78 aa)) constitute an EMI domain. Intrachain disulfides connect C31/C92, C57/C66, C91/C102, C102/C115, C106/C121, C123/C132, C145/C157, C151/C164, C166/C175, C188/C200, C194/C207, C209/C218, C231/C243, C237/C250, and C252/C260. EGF-like domains are found at residues 98–133 (SGDICVPHCAEKCVHGRCVAPNTCQCEPGWGGADCS), 141–176 (WGPHCSSRCQCKNEALCNPITGACICAPGYHGWRCE), 184–219 (YGNNCQQKCLCQNNATCHHITGECVCSPGYTGAFCE), and 227–261 (HGQQCEERCPCQNGGVCHHVTGECSCPAGWGMVCG). An N-linked (GlcNAc...) asparagine glycan is attached at N197. N272 carries N-linked (GlcNAc...) asparagine glycosylation. EGF-like domains follow at residues 274-304 (SQECQCHNGGICSPSTGQCVCSSGYTGERCQ) and 312-347 (YGIGCSQACRCVNGAQCYHVSGACLCEQGYTGESCE). 6 disulfide bridges follow: C277/C285, C279/C292, C294/C303, C316/C328, C322/C335, and C337/C346. N-linked (GlcNAc...) asparagine glycans are attached at residues N369 and N393. EGF-like domains follow at residues 401 to 436 (YGEACQEVCRCQNGADCHSVSGECICAPGYKGSDCA), 444 to 479 (YGINCTSLCSCKNGAICSPIDGSCSCQAGWHGVDCS), 487 to 522 (WGLGCNLSCVCGNGGACNALDGKCTCTPGWRGDRCD), 573 to 608 (WGPNCSLSCNCKNSASCSPDEGACECAPGFRGTTCQ), 616 to 653 (FGHRCSQACPHCVHSNGPCHHVTGQCECLPGFKGALCN), 666 to 696 (GGSCTCTNNGTCSPMDGSCQCYPGWIGSDCS), 709 to 739 (IHTCNCHNGAFCSAYDGECKCTAGWTGLYCT), 747 to 782 (YGKDCVQACQCENGADCNHISGQCTCRTGFMGRHCE), and 795 to 825 (RQVCDCLNNSTCDHMTGTCYCNPGWKGTRCD). 3 disulfide bridges follow: C405–C417, C411–C424, and C426–C435. N447 carries N-linked (GlcNAc...) asparagine glycosylation. 6 disulfide bridges follow: C448/C460, C454/C467, C469/C478, C491/C503, C497/C510, and C512/C521. A glycan (N-linked (GlcNAc...) asparagine) is linked at N492. N576 carries an N-linked (GlcNAc...) asparagine glycan. Intrachain disulfides connect C577-C589, C583-C596, C598-C607, C620-C634, C624-C641, C643-C652, C669-C677, C671-C684, C686-C695, C712-C720, C714-C727, C729-C738, C751-C763, C757-C770, C772-C781, C798-C806, C800-C813, and C815-C824. An N-linked (GlcNAc...) asparagine glycan is attached at N674. N803 is a glycosylation site (N-linked (GlcNAc...) asparagine). A helical membrane pass occupies residues 852 to 872 (AITGIIILVLLVLILLLLFII). Over 873-1119 (YRKKQKGKES…SSPSPTEDSK (247 aa)) the chain is Cytoplasmic.

Belongs to the MEGF family.

It localises to the cell membrane. In terms of biological role, membrane receptor involved in phagocytosis by macrophages and astrocytes of apoptotic cells. Essential factor in the regulation of muscle development including myogenesis. Likely plays a key role in muscle cell proliferation, adhesion and motility. May control the balance between skeletal muscle satellite cells proliferation and differentiation through regulation of the notch signaling pathway. The sequence is that of Multiple epidermal growth factor-like domains protein 10 from Danio rerio (Zebrafish).